We begin with the raw amino-acid sequence, 1070 residues long: Protocadherin-8 (1070 aa).

The N-terminal stretch at 1 to 29 (MSPAKRWGSPCLFPLQLFSLCWVLSVAQS) is a signal peptide. Cadherin domains are found at residues 30-135 (KTVR…APRF), 136-245 (PRAQ…SPAF), 247-354 (QGAV…APEI), 393-497 (QEAG…APIF), 498-609 (TKPV…SPIL), and 615-721 (ANGS…VPAS). Residues 30–747 (KTVRYSTFEE…SGPSLQWDTP (718 aa)) lie on the Extracellular side of the membrane. Asn616 carries an N-linked (GlcNAc...) asparagine glycan. Over residues 716–725 (SAVPASSGSP) the composition is skewed to low complexity. The interval 716–740 (SAVPASSGSPEHSRPPGSRLAPSGP) is disordered. A helical membrane pass occupies residues 748–768 (LIVIIVLAGSCTLLLAAIIAI). Residues 769–1070 (ATTCNRRKKE…SPKKGINENV (302 aa)) lie on the Cytoplasmic side of the membrane. 3 disordered regions span residues 777 to 859 (KEVR…TGES), 906 to 928 (REAEKFSGKDSGKGDSDFNDSDS), and 1046 to 1070 (IGVPLYESPPGSRYVSPKKGINENV). 2 stretches are compositionally biased toward basic and acidic residues: residues 780–790 (RKGGALREERP) and 906–921 (REAEKFSGKDSGKGDS). Position 1053 is a phosphoserine (Ser1053).

In terms of assembly, the N-terminal extracellular domain forms homophilic interactions; these interactions activate p38 MAPK via TAOK2 and trigger endocytosis. Interacts with CDH2; this interaction may lead to CDH2 cointernalization. Interacts with CDH11. Interacts with TAOK2.

It is found in the cell membrane. It localises to the cell projection. Its subcellular location is the dendrite. The protein resides in the presynaptic cell membrane. The protein localises to the postsynaptic cell membrane. Functionally, calcium-dependent cell-adhesion protein. May play a role in activity-induced synaptic reorganization underlying long term memory. Could be involved in CDH2 internalization through TAOK2/p38 MAPK pathway. In hippocampal neurons, may play a role in the down-regulation of dendritic spines, maybe through its action on CDH2 endocytosis. The chain is Protocadherin-8 (Pcdh8) from Mus musculus (Mouse).